A 238-amino-acid chain; its full sequence is Androgen-induced gene 1 protein (238 aa).

Residues 1–12 are Cytoplasmic-facing; it reads MALVPCQVLRMA. Residues 13–30 traverse the membrane as a helical segment; that stretch reads ILLSYCSILCNYKAIEMP. At 31–44 the chain is on the extracellular side; the sequence is SHQTYGGSWKFLTF. A helical membrane pass occupies residues 45-67; sequence IDLVIQAVFFGICVLTDLSSLLT. The Cytoplasmic segment spans residues 68 to 87; it reads RGSGNQEQERQLKKLISLRD. Residues 88 to 110 form a helical membrane-spanning segment; the sequence is WMLAVLAFPVGVFVVAVFWIIYA. Residues 111–124 are Extracellular-facing; sequence YDREMIYPKLLDNF. The helical transmembrane segment at 125 to 144 threads the bilayer; it reads IPGWLNHGMHTTVLPFILIE. Residues 145-156 lie on the Cytoplasmic side of the membrane; it reads MRTSHHQYPSRS. The chain crosses the membrane as a helical span at residues 157–179; sequence SGLTAICTFSVGYILWVCWVHHV. Residues 180 to 193 are Extracellular-facing; the sequence is TGMWVYPFLEHIGP. A helical transmembrane segment spans residues 194–216; the sequence is GARIIFFGSTTILMNFLYLLGEV. The Cytoplasmic segment spans residues 217–238; the sequence is LNNYIWDTQKSMEEEKEKPKLE.

This sequence belongs to the AIG1 family. Highly expressed in heart, ovary, testis, liver, and kidney, at lower levels in spleen, prostate, brain, skeletal muscle, pancreas, small intestine and colon, and undetected in peripheral blood leukocytes, thymus, lung and placenta. AIG1 expression is higher in hair follicles from males than from females.

It localises to the cell membrane. It catalyses the reaction 9-hexadecanoyloxy-octadecanoate + H2O = 9-hydroxy-octadecanoate + hexadecanoate + H(+). It carries out the reaction 12-hexadecanoyloxy-octadecanoate + H2O = 12-hydroxyoctadecanoate + hexadecanoate + H(+). The enzyme catalyses 9-(9Z-hexadecenoyloxy)-octadecanoate + H2O = (9Z)-hexadecenoate + 9-hydroxy-octadecanoate + H(+). The catalysed reaction is 12-(9Z-hexadecenoyloxy)-octadecanoate + H2O = 12-hydroxyoctadecanoate + (9Z)-hexadecenoate + H(+). It catalyses the reaction 13-(9Z-hexadecenoyloxy)-octadecanoate + H2O = 13-hydroxy-octadecanoate + (9Z)-hexadecenoate + H(+). It carries out the reaction 9-octadecanoyloxy-octadecanoate + H2O = 9-hydroxy-octadecanoate + octadecanoate + H(+). The enzyme catalyses 12-octadecanoyloxy-octadecanoate + H2O = 12-hydroxyoctadecanoate + octadecanoate + H(+). The catalysed reaction is 13-octadecanoyloxy-octadecanoate + H2O = 13-hydroxy-octadecanoate + octadecanoate + H(+). It catalyses the reaction 9-(9Z-octadecenoyloxy)-octadecanoate + H2O = 9-hydroxy-octadecanoate + (9Z)-octadecenoate + H(+). It carries out the reaction 12-(9Z-octadecenoyloxy)-octadecanoate + H2O = 12-hydroxyoctadecanoate + (9Z)-octadecenoate + H(+). The enzyme catalyses 13-(9Z-octadecenoyloxy)-octadecanoate + H2O = 13-hydroxy-octadecanoate + (9Z)-octadecenoate + H(+). The catalysed reaction is 5-(9Z-hexadecenoyloxy)-octadecanoate + H2O = 5-hydroxy-octadecanoate + (9Z)-hexadecenoate + H(+). With respect to regulation, inhibited by N-hydroxyhydantoin carbamate JJH260 and beta-lactone KC01. In terms of biological role, hydrolyzes bioactive fatty-acid esters of hydroxy-fatty acids (FAHFAs), but not other major classes of lipids. Show a preference for FAHFAs with branching distal from the carboxylate head group of the lipids. The sequence is that of Androgen-induced gene 1 protein (AIG1) from Homo sapiens (Human).